Reading from the N-terminus, the 114-residue chain is T cell receptor beta variable 6-6 (114 aa).

A signal peptide spans 1–21 (MSISLLCCAAFPLLWAGPVNA). An Ig-like domain is found at 22–114 (GVTQTPKFRI…TSVYFCASSY (93 aa)). Cys-42 and Cys-110 are disulfide-bonded. The N-linked (GlcNAc...) asparagine glycan is linked to Asn-84.

Alpha-beta TR is a heterodimer composed of an alpha and beta chain; disulfide-linked. The alpha-beta TR is associated with the transmembrane signaling CD3 coreceptor proteins to form the TR-CD3 (TcR or TCR). The assembly of alpha-beta TR heterodimers with CD3 occurs in the endoplasmic reticulum where a single alpha-beta TR heterodimer associates with one CD3D-CD3E heterodimer, one CD3G-CD3E heterodimer and one CD247 homodimer forming a stable octameric structure. CD3D-CD3E and CD3G-CD3E heterodimers preferentially associate with TR alpha and TR beta chains, respectively. The association of the CD247 homodimer is the last step of TcR assembly in the endoplasmic reticulum and is required for transport to the cell surface.

Its subcellular location is the cell membrane. Its function is as follows. V region of the variable domain of T cell receptor (TR) beta chain that participates in the antigen recognition. Alpha-beta T cell receptors are antigen specific receptors which are essential to the immune response and are present on the cell surface of T lymphocytes. Recognize peptide-major histocompatibility (MH) (pMH) complexes that are displayed by antigen presenting cells (APC), a prerequisite for efficient T cell adaptive immunity against pathogens. Binding of alpha-beta TR to pMH complex initiates TR-CD3 clustering on the cell surface and intracellular activation of LCK that phosphorylates the ITAM motifs of CD3G, CD3D, CD3E and CD247 enabling the recruitment of ZAP70. In turn ZAP70 phosphorylates LAT, which recruits numerous signaling molecules to form the LAT signalosome. The LAT signalosome propagates signal branching to three major signaling pathways, the calcium, the mitogen-activated protein kinase (MAPK) kinase and the nuclear factor NF-kappa-B (NF-kB) pathways, leading to the mobilization of transcription factors that are critical for gene expression and essential for T cell growth and differentiation. The T cell repertoire is generated in the thymus, by V-(D)-J rearrangement. This repertoire is then shaped by intrathymic selection events to generate a peripheral T cell pool of self-MH restricted, non-autoaggressive T cells. Post-thymic interaction of alpha-beta TR with the pMH complexes shapes TR structural and functional avidity. This Homo sapiens (Human) protein is T cell receptor beta variable 6-6.